We begin with the raw amino-acid sequence, 248 residues long: Probable transcriptional regulatory protein FTN_1028 (248 aa).

The protein belongs to the TACO1 family.

The protein localises to the cytoplasm. In Francisella tularensis subsp. novicida (strain U112), this protein is Probable transcriptional regulatory protein FTN_1028.